Here is a 295-residue protein sequence, read N- to C-terminus: Protoheme IX farnesyltransferase (295 aa).

The next 9 helical transmembrane spans lie at 9-29 (ITKPGIIFGNVLSVAGGFFLA), 36-56 (FGVFLAAVIGTSLVVASGCVF), 80-100 (LVSLKLALLYATILGVAGVAL), 108-128 (LAALFAVIGFVIYVGLYSLYL), 135-155 (GTLVGSLSGAMPPVIGYCAVT), 163-183 (LTLLVMFSLWQMPHSYAIAIF), 209-229 (IMLYILAFLVATLMLTVGGYA), 230-250 (GLNYLAVAAGMGMYWLYMAWK), and 265-285 (FVFSIFTITALSVMMSVDFQV).

It belongs to the UbiA prenyltransferase family. Protoheme IX farnesyltransferase subfamily.

The protein resides in the cell inner membrane. It catalyses the reaction heme b + (2E,6E)-farnesyl diphosphate + H2O = Fe(II)-heme o + diphosphate. Its pathway is porphyrin-containing compound metabolism; heme O biosynthesis; heme O from protoheme: step 1/1. Converts heme B (protoheme IX) to heme O by substitution of the vinyl group on carbon 2 of heme B porphyrin ring with a hydroxyethyl farnesyl side group. The sequence is that of Protoheme IX farnesyltransferase from Pseudomonas savastanoi pv. phaseolicola (strain 1448A / Race 6) (Pseudomonas syringae pv. phaseolicola (strain 1448A / Race 6)).